We begin with the raw amino-acid sequence, 351 residues long: uncharacterized protein (351 aa).

Positions 1–32 are cleaved as a signal peptide; it reads MKNKKRVFIASSLSCVLLLLSAANTEANSANK. The segment at 26–74 is disordered; it reads EANSANKDSQDQTKKEHVDKAQQKEKRNVNDKDKNTPGPDDIGKNGKVT. The segment covering 33–60 has biased composition (basic and acidic residues); the sequence is DSQDQTKKEHVDKAQQKEKRNVNDKDKN.

This sequence belongs to the aerolysin family.

This is an uncharacterized protein from Staphylococcus aureus (strain MRSA252).